The chain runs to 411 residues: DNA polymerase processivity factor (411 aa).

Residues 296–411 (LKQPAEQEQP…SNSNSFVSII (116 aa)) are disordered. A compositionally biased stretch (low complexity) spans 304 to 318 (QPTTSQPSDPQSSNS). Residues 345–358 (DSEEDSDSDSDQDC) show a composition bias toward acidic residues.

Belongs to the herpesviridae DNA polymerase accessory subunit family.

In terms of biological role, increases the processivity of the viral polymerase, probably by acting as a sliding clamp that prevents dissociation of the polymerase from the active template. This is DNA polymerase processivity factor (59) from Alcelaphine herpesvirus 1 (strain C500) (AlHV-1).